The primary structure comprises 367 residues: Protein SGT1 homolog (367 aa).

TPR repeat units lie at residues 6–39 (ASDL…SPAT), 40–73 (AELY…DPSM), and 75–107 (KAYL…ASGD). Residues 165–254 (KPKYRHDFYN…AEQITWTSLD (90 aa)) enclose the CS domain. Disordered stretches follow at residues 261–289 (AVPQ…DWDK) and 347–367 (VGSK…KWEY). In terms of domain architecture, SGS spans 277-367 (SYPSSKSKKD…DGMELKKWEY (91 aa)).

It belongs to the SGT1 family. As to quaternary structure, interacts (via CS domain) with RAR1 (via CHORD 2 domain). Interacts with RAD6. Expressed in roots, root tips, shoot apical meristem (SAM), young leaves, flag leaves and ears.

It is found in the cytoplasm. The protein resides in the nucleus. Its function is as follows. Involved in basal disease resistance to bacterial blight (X.oryzae). May act as positive regulator of basal defense. Probably required for SCF-mediated ubiquitination, by coupling HSP90 to SCF complex for ubiquitination of HSP90 client proteins. The polypeptide is Protein SGT1 homolog (Oryza sativa subsp. japonica (Rice)).